We begin with the raw amino-acid sequence, 37 residues long: Cytochrome b6-f complex subunit 5 (37 aa).

The helical transmembrane segment at 5-25 (LLSGVVLGLILVTLSGLFFAA) threads the bilayer.

It belongs to the PetG family. As to quaternary structure, the 4 large subunits of the cytochrome b6-f complex are cytochrome b6, subunit IV (17 kDa polypeptide, PetD), cytochrome f and the Rieske protein, while the 4 small subunits are PetG, PetL, PetM and PetN. The complex functions as a dimer.

Its subcellular location is the cellular thylakoid membrane. Its function is as follows. Component of the cytochrome b6-f complex, which mediates electron transfer between photosystem II (PSII) and photosystem I (PSI), cyclic electron flow around PSI, and state transitions. PetG is required for either the stability or assembly of the cytochrome b6-f complex. The chain is Cytochrome b6-f complex subunit 5 from Trichodesmium erythraeum (strain IMS101).